The primary structure comprises 100 residues: NADH-quinone oxidoreductase subunit K (100 aa).

3 consecutive transmembrane segments (helical) span residues 1-21, 28-48, and 64-84; these read MIGL…GLAG, ILLL…GFIA, and FIIA…ILWF.

This sequence belongs to the complex I subunit 4L family. In terms of assembly, NDH-1 is composed of 14 different subunits. Subunits NuoA, H, J, K, L, M, N constitute the membrane sector of the complex.

Its subcellular location is the cell inner membrane. The catalysed reaction is a quinone + NADH + 5 H(+)(in) = a quinol + NAD(+) + 4 H(+)(out). In terms of biological role, NDH-1 shuttles electrons from NADH, via FMN and iron-sulfur (Fe-S) centers, to quinones in the respiratory chain. The immediate electron acceptor for the enzyme in this species is believed to be ubiquinone. Couples the redox reaction to proton translocation (for every two electrons transferred, four hydrogen ions are translocated across the cytoplasmic membrane), and thus conserves the redox energy in a proton gradient. The polypeptide is NADH-quinone oxidoreductase subunit K (Helicobacter pylori (strain G27)).